Here is a 504-residue protein sequence, read N- to C-terminus: 26S proteasome non-ATPase regulatory subunit 5 (504 aa).

An N-acetylalanine modification is found at Ala-2.

Belongs to the proteasome subunit S5B/HSM3 family. In terms of assembly, interacts with PSMC1, PSMC2, PSMD1 and PSMD6. Part of transient complex containing PSMD5, PSMC2, PSMC1 and PSMD2 formed during the assembly of the 26S proteasome.

Its function is as follows. Acts as a chaperone during the assembly of the 26S proteasome, specifically of the base subcomplex of the PA700/19S regulatory complex (RC). In the initial step of the base subcomplex assembly is part of an intermediate PSMD5:PSMC2:PSMC1:PSMD2 module which probably assembles with a PSMD10:PSMC4:PSMC5:PAAF1 module followed by dissociation of PSMD5. The polypeptide is 26S proteasome non-ATPase regulatory subunit 5 (PSMD5) (Homo sapiens (Human)).